We begin with the raw amino-acid sequence, 561 residues long: Probable galacturonosyltransferase 9 (561 aa).

Residues 1-27 lie on the Cytoplasmic side of the membrane; it reads MAVAFRGGRGGVGSGQSTGLRSFFSYR. A helical; Signal-anchor for type II membrane protein transmembrane segment spans residues 28 to 48; the sequence is IFISALFSFLFLATFSVVLNS. Over 49–561 the chain is Lumenal; the sequence is SRHQPHQDHT…EFVQMCNFGL (513 aa). N-linked (GlcNAc...) asparagine glycans are attached at residues Asn-124, Asn-320, Asn-346, and Asn-426.

This sequence belongs to the glycosyltransferase 8 family. In terms of tissue distribution, expressed in roots, inflorescences, siliques, leaves and stems.

The protein localises to the golgi apparatus membrane. Its pathway is glycan metabolism; pectin biosynthesis. In terms of biological role, may be involved in pectin synthesis. The polypeptide is Probable galacturonosyltransferase 9 (GAUT9) (Arabidopsis thaliana (Mouse-ear cress)).